The chain runs to 277 residues: Undecaprenyl-diphosphatase (277 aa).

Helical transmembrane passes span 47-67, 85-105, 108-128, 187-207, 218-238, and 249-269; these read FNII…RGKI, ANLL…ADLI, WLFN…VMLW, FSFF…GYVY, VFAV…RALL, and FAWY…FHLI.

This sequence belongs to the UppP family.

It localises to the cell inner membrane. The enzyme catalyses di-trans,octa-cis-undecaprenyl diphosphate + H2O = di-trans,octa-cis-undecaprenyl phosphate + phosphate + H(+). Its function is as follows. Catalyzes the dephosphorylation of undecaprenyl diphosphate (UPP). Confers resistance to bacitracin. This chain is Undecaprenyl-diphosphatase, found in Pseudomonas aeruginosa (strain ATCC 15692 / DSM 22644 / CIP 104116 / JCM 14847 / LMG 12228 / 1C / PRS 101 / PAO1).